The primary structure comprises 476 residues: Argininosuccinate lyase (476 aa).

Belongs to the lyase 1 family. Argininosuccinate lyase subfamily.

It is found in the cytoplasm. The enzyme catalyses 2-(N(omega)-L-arginino)succinate = fumarate + L-arginine. Its pathway is amino-acid biosynthesis; L-arginine biosynthesis; L-arginine from L-ornithine and carbamoyl phosphate: step 3/3. In Leptothrix cholodnii (strain ATCC 51168 / LMG 8142 / SP-6) (Leptothrix discophora (strain SP-6)), this protein is Argininosuccinate lyase.